The following is a 163-amino-acid chain: Inorganic pyrophosphatase (163 aa).

Residue E8 participates in Mg(2+) binding. Residues K16, R30, and Y42 each coordinate substrate. D52, D57, D84, and D89 together coordinate Mg(2+). D89 functions as the Proton acceptor in the catalytic mechanism. Y126 contacts substrate.

It belongs to the PPase family. Homohexamer. The cofactor is Mg(2+).

The protein localises to the cytoplasm. It carries out the reaction diphosphate + H2O = 2 phosphate + H(+). Its function is as follows. Catalyzes the hydrolysis of inorganic pyrophosphate (PPi) forming two phosphate ions. In Streptomyces coelicolor (strain ATCC BAA-471 / A3(2) / M145), this protein is Inorganic pyrophosphatase.